Consider the following 92-residue polypeptide: UPF0223 protein SP_1404 (92 aa).

Belongs to the UPF0223 family.

This is UPF0223 protein SP_1404 from Streptococcus pneumoniae serotype 4 (strain ATCC BAA-334 / TIGR4).